Here is a 451-residue protein sequence, read N- to C-terminus: Exodeoxyribonuclease 7 large subunit (451 aa).

The protein belongs to the XseA family. In terms of assembly, heterooligomer composed of large and small subunits.

Its subcellular location is the cytoplasm. The enzyme catalyses Exonucleolytic cleavage in either 5'- to 3'- or 3'- to 5'-direction to yield nucleoside 5'-phosphates.. Bidirectionally degrades single-stranded DNA into large acid-insoluble oligonucleotides, which are then degraded further into small acid-soluble oligonucleotides. This is Exodeoxyribonuclease 7 large subunit from Bacillus cytotoxicus (strain DSM 22905 / CIP 110041 / 391-98 / NVH 391-98).